The following is a 222-amino-acid chain: Superoxide dismutase [Mn], mitochondrial (222 aa).

A mitochondrion-targeting transit peptide spans 1–24 (MLCRAACSAGRRLGPAASTAGSRH). Mn(2+) is bound at residue H50. Position 58 is a 3'-nitrotyrosine (Y58). K68 and K75 each carry N6-acetyllysine; alternate. Residues K68 and K75 each carry the N6-succinyllysine; alternate modification. H98 provides a ligand contact to Mn(2+). N6-acetyllysine is present on K114. 2 positions are modified to N6-acetyllysine; alternate: K122 and K130. An N6-succinyllysine; alternate mark is found at K122 and K130. Residues D183 and H187 each contribute to the Mn(2+) site. Residue K202 is modified to N6-acetyllysine.

Belongs to the iron/manganese superoxide dismutase family. As to quaternary structure, homotetramer. It depends on Mn(2+) as a cofactor. Nitrated under oxidative stress. Nitration coupled with oxidation inhibits the catalytic activity. Post-translationally, acetylation at Lys-122 decreases enzymatic activity. Deacetylated by SIRT3 upon exposure to ionizing radiations or after long fasting. In terms of processing, polyubiquitinated; leading to proteasomal degradation. Deubiquitinated by USP36 which increases protein stability.

The protein localises to the mitochondrion matrix. The enzyme catalyses 2 superoxide + 2 H(+) = H2O2 + O2. Functionally, destroys superoxide anion radicals which are normally produced within the cells and which are toxic to biological systems. The polypeptide is Superoxide dismutase [Mn], mitochondrial (Sod2) (Rattus norvegicus (Rat)).